We begin with the raw amino-acid sequence, 393 residues long: Protein DDI1 homolog 2 (393 aa).

Residues 1-81 (MLITVYCVRR…VILRQKEAPE (81 aa)) enclose the Ubiquitin-like domain. Residues 82 to 127 (TRPAAPFPGLDFSTIAVPGASSQPDPSQPQAPPPPPDTSSFPQGLD) are disordered. Residues 107 to 118 (PSQPQAPPPPPD) show a composition bias toward pro residues. The active site involves aspartate 246. The Ubiquitin-binding signature appears at 370–389 (EEIADRELAEVLQKSADEAD).

It belongs to the DDI1 family. In terms of assembly, homodimer.

Its subcellular location is the cytoplasm. The protein localises to the cytosol. It is found in the chromosome. Its function is as follows. Aspartic protease that mediates the cleavage of NFE2L1/NRF1 at 'Leu-104', thereby promoting release of NFE2L1/NRF1 from the endoplasmic reticulum membrane. Ubiquitination of NFE2L1/NRF1 is a prerequisite for cleavage, suggesting that DDI2 specifically recognizes and binds ubiquitinated NFE2L1/NRF1. Seems to act as a proteasomal shuttle which links the proteasome and replication fork proteins like RTF2. Required for cellular survival following replication stress. The sequence is that of Protein DDI1 homolog 2 (ddi2) from Xenopus laevis (African clawed frog).